Here is a 455-residue protein sequence, read N- to C-terminus: Bifunctional protein GlmU (455 aa).

Positions 1–230 (MSNRFAVILA…VEETLGVNDR (230 aa)) are pyrophosphorylase. UDP-N-acetyl-alpha-D-glucosamine contacts are provided by residues 9–12 (LAAG), Lys-23, Gln-73, and 78–79 (GT). Asp-103 is a Mg(2+) binding site. UDP-N-acetyl-alpha-D-glucosamine-binding residues include Gly-140, Glu-155, Asn-170, and Asn-228. Position 228 (Asn-228) interacts with Mg(2+). A linker region spans residues 231–251 (VALAQAEQVMKRRINEAWMRK). Residues 252–455 (GVTFIDPEQT…KEHYVTKKNN (204 aa)) are N-acetyltransferase. Positions 333 and 351 each coordinate UDP-N-acetyl-alpha-D-glucosamine. The active-site Proton acceptor is the His-363. UDP-N-acetyl-alpha-D-glucosamine is bound by residues Tyr-366 and Asn-377. Acetyl-CoA contacts are provided by residues 386–387 (NY), Ala-423, and Arg-440.

In the N-terminal section; belongs to the N-acetylglucosamine-1-phosphate uridyltransferase family. This sequence in the C-terminal section; belongs to the transferase hexapeptide repeat family. In terms of assembly, homotrimer. Requires Mg(2+) as cofactor.

The protein localises to the cytoplasm. It catalyses the reaction alpha-D-glucosamine 1-phosphate + acetyl-CoA = N-acetyl-alpha-D-glucosamine 1-phosphate + CoA + H(+). The enzyme catalyses N-acetyl-alpha-D-glucosamine 1-phosphate + UTP + H(+) = UDP-N-acetyl-alpha-D-glucosamine + diphosphate. It participates in nucleotide-sugar biosynthesis; UDP-N-acetyl-alpha-D-glucosamine biosynthesis; N-acetyl-alpha-D-glucosamine 1-phosphate from alpha-D-glucosamine 6-phosphate (route II): step 2/2. Its pathway is nucleotide-sugar biosynthesis; UDP-N-acetyl-alpha-D-glucosamine biosynthesis; UDP-N-acetyl-alpha-D-glucosamine from N-acetyl-alpha-D-glucosamine 1-phosphate: step 1/1. It functions in the pathway bacterial outer membrane biogenesis; LPS lipid A biosynthesis. In terms of biological role, catalyzes the last two sequential reactions in the de novo biosynthetic pathway for UDP-N-acetylglucosamine (UDP-GlcNAc). The C-terminal domain catalyzes the transfer of acetyl group from acetyl coenzyme A to glucosamine-1-phosphate (GlcN-1-P) to produce N-acetylglucosamine-1-phosphate (GlcNAc-1-P), which is converted into UDP-GlcNAc by the transfer of uridine 5-monophosphate (from uridine 5-triphosphate), a reaction catalyzed by the N-terminal domain. This Halalkalibacterium halodurans (strain ATCC BAA-125 / DSM 18197 / FERM 7344 / JCM 9153 / C-125) (Bacillus halodurans) protein is Bifunctional protein GlmU.